We begin with the raw amino-acid sequence, 389 residues long: UDP-D-apiose/UDP-D-xylose synthase 1 (389 aa).

NAD(+) is bound by residues Phe-28, Ile-29, Asp-49, Asn-76, Ile-77, and Leu-96. Tyr-105, Thr-139, Glu-141, Arg-182, and Tyr-185 together coordinate UDP-alpha-D-glucuronate. Residues Tyr-185 and Lys-189 each contribute to the NAD(+) site. Tyr-185 functions as the Proton acceptor in the catalytic mechanism. Residue Asn-214 participates in UDP-alpha-D-glucuronate binding. NAD(+)-binding residues include Trp-215 and Arg-235. The UDP-alpha-D-glucuronate site is built by Lys-251, Val-253, Arg-260, Tyr-331, Tyr-335, Asp-337, and Arg-341.

The protein belongs to the NAD(P)-dependent epimerase/dehydratase family. In terms of assembly, homodimer and heterodimer with AXS2. NAD(+) serves as cofactor. In terms of tissue distribution, widely expressed with stronger expression in leaves and stems, and lower levels in flowers, siliques, pistils, pollen and roots.

It localises to the cytoplasm. The catalysed reaction is UDP-alpha-D-glucuronate + H(+) = UDP-alpha-D-xylose + CO2. It carries out the reaction UDP-alpha-D-glucuronate + H(+) = UDP-alpha-D-apiose + CO2. With respect to regulation, inhibited by UDP-D-galacturonate. Its function is as follows. Together with AXS2, catalyzes the conversion of UDP-D-glucuronate into a mixture of UDP-D-apiose (UDP-Api) as the main product and UDP-D-xylose to a lesser extent, via a cycle of oxidation and reduction. D-Apiose (3-C-hydroxymethyl-d-erythrose) is the only plant cell wall monosaccharide with a branched carbon skeleton and is found in rhamnogalacturonan II (RG-II), apiogalacturonan, and several apioglycosides. The chain is UDP-D-apiose/UDP-D-xylose synthase 1 from Arabidopsis thaliana (Mouse-ear cress).